The following is a 1199-amino-acid chain: Metabotropic glutamate receptor 1 (1199 aa).

An N-terminal signal peptide occupies residues methionine 1–isoleucine 18. The Extracellular portion of the chain corresponds to leucine 19–glutamate 592. An intrachain disulfide couples cysteine 67 to cysteine 109. Tyrosine 74 contacts L-glutamate. The N-linked (GlcNAc...) asparagine glycan is linked to asparagine 98. L-glutamate contacts are provided by residues serine 165 and serine 186–threonine 188. Asparagine 223 carries N-linked (GlcNAc...) asparagine glycosylation. Tyrosine 236 contributes to the L-glutamate binding site. A disulfide bond links cysteine 289 and cysteine 291. Aspartate 318 lines the L-glutamate pocket. Cysteine 378 and cysteine 394 form a disulfide bridge. N-linked (GlcNAc...) asparagine glycosylation occurs at asparagine 397. L-glutamate is bound at residue lysine 409. An intrachain disulfide couples cysteine 432 to cysteine 439. Asparagine 515 is a glycosylation site (N-linked (GlcNAc...) asparagine). A helical transmembrane segment spans residues serine 593–valine 615. Residues leucine 616–glutamate 629 lie on the Cytoplasmic side of the membrane. A helical membrane pass occupies residues leucine 630 to alanine 650. Residues lysine 651–tyrosine 658 are Extracellular-facing. A disulfide bridge connects residues cysteine 657 and cysteine 746. The helical transmembrane segment at leucine 659–asparagine 680 threads the bilayer. The Cytoplasmic segment spans residues arginine 681–alanine 703. Residues tryptophan 704–methionine 727 traverse the membrane as a helical segment. The Extracellular portion of the chain corresponds to glutamate 728–asparagine 750. The helical transmembrane segment at leucine 751 to phenylalanine 772 threads the bilayer. Topologically, residues lysine 773 to lysine 785 are cytoplasmic. A helical membrane pass occupies residues tyrosine 786–glycine 807. The Extracellular portion of the chain corresponds to serine 808–threonine 815. The helical transmembrane segment at cysteine 816 to alanine 840 threads the bilayer. At lysine 841 to leucine 1199 the chain is on the cytoplasmic side. At serine 853 the chain carries Phosphoserine. Threonine 871 is subject to Phosphothreonine. Disordered stretches follow at residues glycine 882 to lysine 905, glutamate 959 to serine 1036, and histidine 1056 to histidine 1081. Residues asparagine 885–tryptophan 895 show a composition bias toward polar residues. A phosphoserine mark is found at serine 894 and serine 969. Residues glycine 1012–glutamine 1033 are compositionally biased toward pro residues. Serine 1098 carries the post-translational modification Phosphoserine. Positions glutamate 1120–cysteine 1177 are disordered. Residues threonine 1125–leucine 1136 show a composition bias toward acidic residues. At serine 1147 the chain carries Phosphoserine. Threonine 1151 is subject to Phosphothreonine. Serine 1154 carries the phosphoserine modification. Low complexity predominate over residues serine 1159 to valine 1175.

The protein belongs to the G-protein coupled receptor 3 family. Homodimer; disulfide-linked. The PPXXF motif binds HOMER1, HOMER2 and HOMER3. Interacts with TAMALIN. Interacts with RYR1, RYR2, ITPR1, SHANK1 and SHANK3. Interacts with SIAH1. In terms of tissue distribution, predominantly expressed in cerebellar Purkinje cells, CA2-CA3 pyramidal cells of the hippocampus, and mitral and tufted cells of the olfactory bulb.

It is found in the cell membrane. The protein resides in the postsynaptic cell membrane. It localises to the cell projection. Its subcellular location is the dendrite. Its function is as follows. G-protein coupled receptor for glutamate. Ligand binding causes a conformation change that triggers signaling via guanine nucleotide-binding proteins (G proteins) and modulates the activity of down-stream effectors. Signaling activates a phosphatidylinositol-calcium second messenger system. May participate in the central action of glutamate in the CNS, such as long-term potentiation in the hippocampus and long-term depression in the cerebellum. May function in the light response in the retina. Induces GRID1 and GRID2 cation-channel activation via GNAQ-PLC-PKC pathway in dopaminergic neurons and cerebellar Purkinje cell, respectively. In Rattus norvegicus (Rat), this protein is Metabotropic glutamate receptor 1 (Grm1).